Here is a 220-residue protein sequence, read N- to C-terminus: Transmembrane emp24 domain-containing protein 1 (220 aa).

A signal peptide spans 1–19 (MAWSSSFLFIVLPLAAAVA). Residues 20–187 (VQPQDTELTF…LQDSNLERVN (168 aa)) lie on the Extracellular side of the membrane. The region spanning 36–118 (QECFYQTTLY…EKLVFFELIF (83 aa)) is the GOLD domain. Positions 138 to 164 (ELLDIKLEDIKESIESVKSRLERSIQM) form a coiled coil. A helical membrane pass occupies residues 188–208 (FWSAINVGVLVTVAFLQVYML). Residues 209 to 220 (KSLFDDKRKIRT) lie on the Cytoplasmic side of the membrane. Positions 211-212 (LF) match the COPII vesicle coat-binding motif. The COPI vesicle coat-binding signature appears at 211-220 (LFDDKRKIRT).

The protein belongs to the EMP24/GP25L family. As to quaternary structure, homodimer in endoplasmic reticulum, endoplasmic reticulum-Golgi intermediate compartment and cis-Golgi network. Interacts with IL1RL1. Interacts with RNF26; this interaction is important to modulate innate immune signaling through the cGAS-STING pathway.

It is found in the cell membrane. It localises to the endoplasmic reticulum membrane. The protein localises to the golgi apparatus. The protein resides in the cis-Golgi network membrane. Its subcellular location is the endoplasmic reticulum-Golgi intermediate compartment membrane. Its function is as follows. Potential role in vesicular protein trafficking, mainly in the early secretory pathway. May act as a cargo receptor at the lumenal side for incorporation of secretory cargo molecules into transport vesicles and may be involved in vesicle coat formation at the cytoplasmic side. Plays a positive role in IL-33-mediated IL-8 and IL-6 production by interacting with interleukin-33 receptor IL1RL1. Plays also a role in the modulation of innate immune signaling through the cGAS-STING pathway by interacting with RNF26. The chain is Transmembrane emp24 domain-containing protein 1 (tmed1) from Xenopus tropicalis (Western clawed frog).